The sequence spans 142 residues: Large ribosomal subunit protein uL11 (142 aa).

This sequence belongs to the universal ribosomal protein uL11 family. In terms of assembly, part of the ribosomal stalk of the 50S ribosomal subunit. Interacts with L10 and the large rRNA to form the base of the stalk. L10 forms an elongated spine to which L12 dimers bind in a sequential fashion forming a multimeric L10(L12)X complex. Post-translationally, one or more lysine residues are methylated.

In terms of biological role, forms part of the ribosomal stalk which helps the ribosome interact with GTP-bound translation factors. The chain is Large ribosomal subunit protein uL11 from Serratia marcescens.